A 142-amino-acid chain; its full sequence is Large ribosomal subunit protein mL43 (142 aa).

It belongs to the mitochondrion-specific ribosomal protein mL43 family. In terms of assembly, component of the mitochondrial large ribosomal subunit. Mature mitochondrial ribosomes consist of a small (37S) and a large (54S) subunit. The 37S subunit contains at least 33 different proteins and 1 molecule of RNA (15S). The 54S subunit contains at least 45 different proteins and 1 molecule of RNA (21S).

Its subcellular location is the mitochondrion. In Eremothecium gossypii (strain ATCC 10895 / CBS 109.51 / FGSC 9923 / NRRL Y-1056) (Yeast), this protein is Large ribosomal subunit protein mL43 (MRPL51).